The chain runs to 150 residues: MKVIFLADVKGKGKRGEVKEVSTGYAQNFLIKKNLAKEATKQAINELKGKQKSEEKAQAELLAEAKAVKVKLEQESTLVQFSEKVGPDGRTFGSITSKKISEELNKQFGIKLDKRYIKLDHPIRTIGLIEIPVKLHKDIDGIIKLQIKEA.

Belongs to the bacterial ribosomal protein bL9 family.

Functionally, binds to the 23S rRNA. In Streptococcus mutans serotype c (strain ATCC 700610 / UA159), this protein is Large ribosomal subunit protein bL9.